The sequence spans 777 residues: MNQKTLEKIEFPDIINKLWQKAESFPGKQLALKVRPLSDSKIIEEKLLEVEEGLSYLRFKTVDLSVLSDFSEIFLKLSKESMLTGQEIYRLGQLLKVSKDTFFEISRGAFPRLKQIVKLLFFDEALVKDIERSFWPEGTVKDEASPELKRIRGQIARLKDKMREAVEKYLKEPELAKYLQEPLISVRGDRFVLPVKASYKSQVPGIIHDRSNTGQTLFIEPYSAVEAGNELKTLELQEKEIIEKILKDFTQRLACNLTEIKRTYELLGEIDLIVAKARLALELDAYKPRISENGVLSFKQARHPLLGKKAVPFDLTLGKEFDLLIITGPNTGGKTVTLKTIGILTIMARAGLFIPASPETEIGLFGEVYVDIGDEQSIVQSLSTFSSHLLNLKFILENAREGDLVLLDELGTGTDPREGAALAKAILEELRGKKVKVVATTHTSELAAYAIETERVENASVEFDPESLKPTYRLHIGKPGRSNALYIAQGLGLKEQIIEKAKSFLKEEELKLDKLIFDVEQEKRQLEKAKEEVANLLISLKEKEAKLNDELENLEKTKEEIIRKYREKYQQKLLEIERKGKLVIEEIKEKIKTYEEKNLAKLLEEARQKTKEFSQNFALPFEPIKPYRPKVGETVELVEVGQKAEVLAVGENYAIVQAGIMKLNVSFDQIRPAQKQEKENEKGQVKKAGLELTKKQNFNLELDIRGMNTLEAEPVVEKYLDNAYLAGVEKVRIIHGKGTGALKKFLWDYLREVPFVKKFNFAPQNQGGDGATEVYLK.

Residue 328–335 coordinates ATP; it reads GPNTGGKT. Positions 702-777 constitute a Smr domain; it reads LDIRGMNTLE…GDGATEVYLK (76 aa).

Belongs to the DNA mismatch repair MutS family. MutS2 subfamily. As to quaternary structure, homodimer. Binds to stalled ribosomes, contacting rRNA.

Functionally, endonuclease that is involved in the suppression of homologous recombination and thus may have a key role in the control of bacterial genetic diversity. In terms of biological role, acts as a ribosome collision sensor, splitting the ribosome into its 2 subunits. Detects stalled/collided 70S ribosomes which it binds and splits by an ATP-hydrolysis driven conformational change. Acts upstream of the ribosome quality control system (RQC), a ribosome-associated complex that mediates the extraction of incompletely synthesized nascent chains from stalled ribosomes and their subsequent degradation. Probably generates substrates for RQC. The sequence is that of Endonuclease MutS2 from Carboxydothermus hydrogenoformans (strain ATCC BAA-161 / DSM 6008 / Z-2901).